The following is a 523-amino-acid chain: Chitinase Chi52 (523 aa).

Positions 1–30 are cleaved as a signal peptide; it reads MNQAVRFRPVITFALAFLLLITWFAPRADA. Positions 80 to 101 are disordered; it reads GSGGETPTPDTAPPSVPAGLTS. The 86-residue stretch at 95–180 folds into the Fibronectin type-III domain; that stretch reads VPAGLTSSSI…TSLSVTTSNG (86 aa). Residues 190-513 form the GH18 domain; sequence KWLIGYWHNF…SAHRPFLNGL (324 aa). Glu302 serves as the catalytic Proton donor.

This sequence belongs to the glycosyl hydrolase 18 family. Chitinase class II subfamily.

The enzyme catalyses Random endo-hydrolysis of N-acetyl-beta-D-glucosaminide (1-&gt;4)-beta-linkages in chitin and chitodextrins.. Activity is inhibited by Cu(2+) and Co(2+), and almost completely inhibited by SDS. Functionally, acidic chitinase that displays a broad substrate specificity, showing the highest specific activity toward colloidal chitin, followed by ethylene glycol chitin and ball milled chitin, but exhibits no activity toward powdery chitin and chitosan. Hydrolyzes colloidal chitin and chitooligosaccharides with degree of polymerization 2-5 to release mainly N-acetyl chitobiose. Displays inhibition effects on the growth of some phytopathogenic fungi, including Alternaria alstroemeriae, Botrytis cinerea, Rhizoctonia solani, Sclerotinia sclerotiorum and Valsa mali. In Paenibacillus xylanexedens, this protein is Chitinase Chi52.